The primary structure comprises 823 residues: Leucine--tRNA ligase (823 aa).

The 'HIGH' region motif lies at Pro42–His52. Positions Lys575–Ser579 match the 'KMSKS' region motif. Lys578 lines the ATP pocket.

Belongs to the class-I aminoacyl-tRNA synthetase family.

The protein localises to the cytoplasm. It carries out the reaction tRNA(Leu) + L-leucine + ATP = L-leucyl-tRNA(Leu) + AMP + diphosphate. In Legionella pneumophila (strain Corby), this protein is Leucine--tRNA ligase.